Here is a 93-residue protein sequence, read N- to C-terminus: Alpha-elapitoxin-Oh2a (93 aa).

Residues 1 to 21 (MKTLLLTLVVVTIVCLDLGYT) form the signal peptide. Intrachain disulfides connect Cys-24–Cys-43, Cys-36–Cys-64, Cys-49–Cys-53, Cys-68–Cys-79, and Cys-80–Cys-85.

It belongs to the three-finger toxin family. Long-chain subfamily. Type II alpha-neurotoxin sub-subfamily. Expressed by the venom gland.

It localises to the secreted. In terms of biological role, binds with high affinity to muscular (alpha-1/CHRNA1) and neuronal (alpha-7/CHRNA7) nicotinic acetylcholine receptor (nAChR) and inhibits acetylcholine from binding to the receptor, thereby impairing neuromuscular and neuronal transmission. This is Alpha-elapitoxin-Oh2a from Ophiophagus hannah (King cobra).